The sequence spans 425 residues: Serine--tRNA ligase (425 aa).

Residue 235-237 participates in L-serine binding; sequence TAE. 266 to 268 provides a ligand contact to ATP; the sequence is RSE. L-serine is bound at residue glutamate 289. ATP is bound at residue 353–356; sequence EISS. An L-serine-binding site is contributed by serine 389.

It belongs to the class-II aminoacyl-tRNA synthetase family. Type-1 seryl-tRNA synthetase subfamily. Homodimer. The tRNA molecule binds across the dimer.

The protein localises to the cytoplasm. It catalyses the reaction tRNA(Ser) + L-serine + ATP = L-seryl-tRNA(Ser) + AMP + diphosphate + H(+). The enzyme catalyses tRNA(Sec) + L-serine + ATP = L-seryl-tRNA(Sec) + AMP + diphosphate + H(+). The protein operates within aminoacyl-tRNA biosynthesis; selenocysteinyl-tRNA(Sec) biosynthesis; L-seryl-tRNA(Sec) from L-serine and tRNA(Sec): step 1/1. In terms of biological role, catalyzes the attachment of serine to tRNA(Ser). Is also able to aminoacylate tRNA(Sec) with serine, to form the misacylated tRNA L-seryl-tRNA(Sec), which will be further converted into selenocysteinyl-tRNA(Sec). The polypeptide is Serine--tRNA ligase (Desulfotalea psychrophila (strain LSv54 / DSM 12343)).